A 344-amino-acid polypeptide reads, in one-letter code: MRNVQAQPLVSPTEPMIDPFGRAVTYLRVSVTDRCDFRCTYCMAEHMTFLPKKDLLTLEELDRLCSVFIEKGVRKLRLTGGEPLVRKNIMHLIGNLSRHLKSGALDELTLTTNGSQLARFAGELADCGVRRINVSLDTLNPEKFRTITRWGDLSRVLEGIDAAQKAGIHVKINAVALKDFNDAEIPELIRWAHGRGMDVTLIETMPMGEIEFDRTDQYLPLSQVRADLASQFTLADIPYRTGGPARYVTISETGGRLGFITPMTYNFCESCNRVRLTCTGMLYMCLGQNDDADLRKALRESESDEHLSQAIDEAISRKPKGHDFIIDREHNRPSVARHMSLTGG.

The Radical SAM core domain maps to 19-245 (PFGRAVTYLR…DIPYRTGGPA (227 aa)). Arginine 28 contacts GTP. The [4Fe-4S] cluster site is built by cysteine 35 and cysteine 39. Tyrosine 41 is a binding site for S-adenosyl-L-methionine. Position 42 (cysteine 42) interacts with [4Fe-4S] cluster. Arginine 77 is a binding site for GTP. An S-adenosyl-L-methionine-binding site is contributed by glycine 81. Threonine 111 lines the GTP pocket. S-adenosyl-L-methionine is bound at residue serine 135. Lysine 171 provides a ligand contact to GTP. Position 205 (methionine 205) interacts with S-adenosyl-L-methionine. [4Fe-4S] cluster-binding residues include cysteine 268 and cysteine 271. Position 273–275 (273–275 (RVR)) interacts with GTP. A [4Fe-4S] cluster-binding site is contributed by cysteine 285.

The protein belongs to the radical SAM superfamily. MoaA family. Monomer and homodimer. The cofactor is [4Fe-4S] cluster.

The catalysed reaction is GTP + AH2 + S-adenosyl-L-methionine = (8S)-3',8-cyclo-7,8-dihydroguanosine 5'-triphosphate + 5'-deoxyadenosine + L-methionine + A + H(+). The protein operates within cofactor biosynthesis; molybdopterin biosynthesis. In terms of biological role, catalyzes the cyclization of GTP to (8S)-3',8-cyclo-7,8-dihydroguanosine 5'-triphosphate. This is GTP 3',8-cyclase from Brucella melitensis biotype 2 (strain ATCC 23457).